The primary structure comprises 418 residues: Enolase 1 (418 aa).

Residue Gln162 participates in (2R)-2-phosphoglycerate binding. The Proton donor role is filled by Glu204. Residues Asp241, Glu285, and Asp312 each coordinate Mg(2+). (2R)-2-phosphoglycerate is bound by residues Lys337, Arg366, Ser367, and Lys388. Lys337 acts as the Proton acceptor in catalysis.

This sequence belongs to the enolase family. Mg(2+) is required as a cofactor.

Its subcellular location is the cytoplasm. The protein resides in the secreted. It is found in the cell surface. It carries out the reaction (2R)-2-phosphoglycerate = phosphoenolpyruvate + H2O. It participates in carbohydrate degradation; glycolysis; pyruvate from D-glyceraldehyde 3-phosphate: step 4/5. In terms of biological role, catalyzes the reversible conversion of 2-phosphoglycerate (2-PG) into phosphoenolpyruvate (PEP). It is essential for the degradation of carbohydrates via glycolysis. This Lactococcus lactis subsp. cremoris (strain SK11) protein is Enolase 1.